The following is a 151-amino-acid chain: Ribonuclease H (151 aa).

In terms of domain architecture, RNase H type-1 spans 1–146 (MSDLFAYTDG…ADELARAGMA (146 aa)). 4 residues coordinate Mg(2+): Asp9, Glu52, Asp74, and Asp138.

Belongs to the RNase H family. As to quaternary structure, monomer. Requires Mg(2+) as cofactor.

Its subcellular location is the cytoplasm. It catalyses the reaction Endonucleolytic cleavage to 5'-phosphomonoester.. Endonuclease that specifically degrades the RNA of RNA-DNA hybrids. The polypeptide is Ribonuclease H (Cereibacter sphaeroides (strain ATCC 17025 / ATH 2.4.3) (Rhodobacter sphaeroides)).